We begin with the raw amino-acid sequence, 415 residues long: Casein kinase I isoform delta (415 aa).

Residues 9-277 enclose the Protein kinase domain; it reads YRLGRKIGSG…YLRQLFRNLF (269 aa). ATP is bound by residues 15–23 and lysine 38; that span reads IGSGSFGDI. Aspartate 128 serves as the catalytic Proton acceptor. Positions 301 to 315 are enriched in basic and acidic residues; that stretch reads AEDAERERREREERL. The disordered stretch occupies residues 301 to 415; the sequence is AEDAERERRE…SSGLPSTVHR (115 aa). Positions 317–342 are autoinhibitory; the sequence is HTRNPAVRGLPSTASGRLRGTQEVTP. Positions 341-352 are enriched in low complexity; that stretch reads TPSTPLTPTSHT. The span at 380-415 shows a compositional bias: polar residues; that stretch reads NVSSSDLTSRQDTSRMSTSQIPSRVTSSGLPSTVHR.

It belongs to the protein kinase superfamily. In terms of assembly, monomer. Interacts with per1 and per2. Component of the circadian core oscillator. Autophosphorylated on serine and threonine residues. Detected in retina photoreceptor cells.

It localises to the cytoplasm. It is found in the nucleus. It carries out the reaction L-seryl-[protein] + ATP = O-phospho-L-seryl-[protein] + ADP + H(+). It catalyses the reaction L-threonyl-[protein] + ATP = O-phospho-L-threonyl-[protein] + ADP + H(+). The enzyme catalyses L-seryl-[tau protein] + ATP = O-phospho-L-seryl-[tau protein] + ADP + H(+). The catalysed reaction is L-threonyl-[tau protein] + ATP = O-phospho-L-threonyl-[tau protein] + ADP + H(+). With respect to regulation, exhibits substrate-dependent heparin activation. Functionally, casein kinases are operationally defined by their preferential utilization of acidic proteins such as caseins as substrates. Can phosphorylate a large number of proteins. Central component of the circadian clock. May act as a negative regulator of circadian rhythmicity by phosphorylating per1 and per2, which may lead to their degradation. Participates in wnt signaling. In terms of biological role, has no kinase activity. The chain is Casein kinase I isoform delta (csnk1d) from Xenopus laevis (African clawed frog).